The following is a 560-amino-acid chain: Hemocyanin, units G and H (560 aa).

Cysteines 1 and 11 form a disulfide. Residues 1–184 (CPTPDAPQYA…AKGLVSQHIE (184 aa)) form a unit G region. A cross-link (2'-(S-cysteinyl)-histidine (Cys-His)) is located at residues 12–14 (CLH). Residues C93 and C98 are joined by a disulfide bond. The N-linked (GlcNAc...) asparagine glycan is linked to N142. Residues 185-560 (DHDTETLIRK…KPGTGTQLTR (376 aa)) are unit H. Cu cation is bound at residue H230. A disulfide bridge connects residues C236 and C246. A glycan (N-linked (GlcNAc...) asparagine) is linked at N240. Residues 247–249 (CQH) constitute a cross-link (2'-(S-cysteinyl)-histidine (Cys-His)). 5 residues coordinate Cu cation: H249, H258, H358, H362, and H389. 2 disulfides stabilise this stretch: C348/C415 and C476/C482.

The protein belongs to the tyrosinase family. Hemocyanin subfamily. As to quaternary structure, decamers of large identical subunits (390 kDa), each containing 8 globular oxygen-binding functional units. The cofactor is Cu(2+).

Functionally, hemocyanins are copper-containing oxygen carriers occurring freely dissolved in the hemolymph of many mollusks and arthropods. The polypeptide is Hemocyanin, units G and H (Sepia officinalis (Common cuttlefish)).